A 224-amino-acid polypeptide reads, in one-letter code: Ribonuclease 3 (224 aa).

The RNase III domain maps to 5–127 (LERLCRRLNY…ILAAIYLDGG (123 aa)). Position 40 (glutamate 40) interacts with Mg(2+). Residue aspartate 44 is part of the active site. Residues aspartate 113 and glutamate 116 each coordinate Mg(2+). Glutamate 116 is a catalytic residue. A DRBM domain is found at 154-224 (DAKTQLQEFL…AKAMLEQLQG (71 aa)).

Belongs to the ribonuclease III family. Homodimer. Mg(2+) is required as a cofactor.

The protein localises to the cytoplasm. It carries out the reaction Endonucleolytic cleavage to 5'-phosphomonoester.. Its function is as follows. Digests double-stranded RNA. Involved in the processing of primary rRNA transcript to yield the immediate precursors to the large and small rRNAs (23S and 16S). Processes some mRNAs, and tRNAs when they are encoded in the rRNA operon. Processes pre-crRNA and tracrRNA of type II CRISPR loci if present in the organism. The sequence is that of Ribonuclease 3 from Legionella pneumophila subsp. pneumophila (strain Philadelphia 1 / ATCC 33152 / DSM 7513).